The chain runs to 359 residues: UDP-2-acetamido-2-deoxy-3-oxo-D-glucuronate aminotransferase (359 aa).

Residues glycine 29, tyrosine 31, and serine 184 each contribute to the UDP-2-acetamido-2-deoxy-alpha-D-ribo-hex-3-uluronate site. Lysine 185 carries the post-translational modification N6-(pyridoxal phosphate)lysine. 3 residues coordinate UDP-2-acetamido-2-deoxy-alpha-D-ribo-hex-3-uluronate: arginine 229, histidine 308, and tyrosine 309.

This sequence belongs to the DegT/DnrJ/EryC1 family. Homodimer. It depends on pyridoxal 5'-phosphate as a cofactor.

The catalysed reaction is UDP-2-acetamido-2-deoxy-alpha-D-ribo-hex-3-uluronate + L-glutamate = UDP-2-acetamido-3-amino-2,3-dideoxy-alpha-D-glucuronate + 2-oxoglutarate. It functions in the pathway bacterial outer membrane biogenesis; LPS O-antigen biosynthesis. In terms of biological role, plays a role in the biosynthesis of B-band O antigen for serotype O5. Catalyzes the amination of UDP-2-acetamido-2-deoxy-3-oxo-D-glucuronic acid (UDP-3-oxo-D-GlcNAcA) to UDP-2-acetamido-3-amino-2,3-dideoxy-D-glucuronic acid (UDP-GlcNAc3NA), using L-glutamate as the preferred amine donor. This Pseudomonas aeruginosa (strain ATCC 15692 / DSM 22644 / CIP 104116 / JCM 14847 / LMG 12228 / 1C / PRS 101 / PAO1) protein is UDP-2-acetamido-2-deoxy-3-oxo-D-glucuronate aminotransferase.